Consider the following 311-residue polypeptide: Olfactory receptor 8H1 (311 aa).

Over 1–25 the chain is Extracellular; sequence MGRRNNTNVPDFILTGLSDSEEVQM. N-linked (GlcNAc...) asparagine glycosylation is present at asparagine 5. A helical membrane pass occupies residues 26–46; sequence ALFILFLLIYLITMLGNVGMI. Topologically, residues 47-54 are cytoplasmic; sequence LIIRLDLQ. The chain crosses the membrane as a helical span at residues 55 to 75; sequence LHTPMYFFLTHLSFIDLSYST. Residues 76–98 are Extracellular-facing; that stretch reads VITPKTLANLLTSNYISFMGCFA. A disulfide bridge links cysteine 96 with cysteine 188. Residues 99 to 119 form a helical membrane-spanning segment; that stretch reads QMFFFVFLGAAECFLLSSMAY. Over 120–138 the chain is Cytoplasmic; the sequence is DRYVAICSPLRYPVIMSKR. A helical membrane pass occupies residues 139 to 159; it reads LCCALVTGPYVISFINSFVNV. Residues 160–196 are Extracellular-facing; the sequence is VWMSRLHFCDSNVVRHFFCDTSPILALSCMDTYDIEI. The chain crosses the membrane as a helical span at residues 197–216; sequence MIHILAGSTLMVSLITISAS. Over 217–236 the chain is Cytoplasmic; the sequence is YVSILSTILKINSTSGKQKA. A helical membrane pass occupies residues 237-257; sequence LSTCASHLLGVTIFYGTMIFT. Topologically, residues 258-270 are extracellular; sequence YLKPRKSYSLGRD. Residues 271-291 form a helical membrane-spanning segment; the sequence is QVASVFYTIVIPMLNPLIYSL. The Cytoplasmic segment spans residues 292-311; it reads RNKEVKNALIRVMQRRQDSR.

This sequence belongs to the G-protein coupled receptor 1 family.

It is found in the cell membrane. In terms of biological role, odorant receptor. In Homo sapiens (Human), this protein is Olfactory receptor 8H1 (OR8H1).